Here is a 501-residue protein sequence, read N- to C-terminus: Proline--tRNA ligase (501 aa).

Belongs to the class-II aminoacyl-tRNA synthetase family.

The enzyme catalyses tRNA(Pro) + L-proline + ATP = L-prolyl-tRNA(Pro) + AMP + diphosphate. The sequence is that of Proline--tRNA ligase from Encephalitozoon cuniculi (strain GB-M1) (Microsporidian parasite).